We begin with the raw amino-acid sequence, 146 residues long: FAD synthase (146 aa).

Residues 9–10, 14–17, and Asp92 contribute to the ATP site; these read TF and HPGH.

It belongs to the archaeal FAD synthase family. In terms of assembly, homodimer. It depends on a divalent metal cation as a cofactor.

It catalyses the reaction FMN + ATP + H(+) = FAD + diphosphate. The protein operates within cofactor biosynthesis; FAD biosynthesis; FAD from FMN: step 1/1. Its function is as follows. Catalyzes the transfer of the AMP portion of ATP to flavin mononucleotide (FMN) to produce flavin adenine dinucleotide (FAD) coenzyme. This Halobacterium salinarum (strain ATCC 29341 / DSM 671 / R1) protein is FAD synthase.